Here is a 30-residue protein sequence, read N- to C-terminus: Trypsin inhibitor 3 (30 aa).

At Q1 the chain carries Pyrrolidone carboxylic acid. Disulfide bonds link C4–C21, C11–C23, and C17–C29.

The protein resides in the secreted. In terms of biological role, inhibits trypsin; probably participates in a plant defense mechanism. This chain is Trypsin inhibitor 3, found in Momordica cochinchinensis (Spiny bitter cucumber).